The primary structure comprises 312 residues: DNA primase small subunit PriS (312 aa).

Catalysis depends on residues Asp-88, Asp-90, and Asp-215.

It belongs to the eukaryotic-type primase small subunit family. Heterodimer of a small subunit (PriS) and a large subunit (PriL). Mg(2+) is required as a cofactor. Requires Mn(2+) as cofactor.

Catalytic subunit of DNA primase, an RNA polymerase that catalyzes the synthesis of short RNA molecules used as primers for DNA polymerase during DNA replication. The small subunit contains the primase catalytic core and has DNA synthesis activity on its own. Binding to the large subunit stabilizes and modulates the activity, increasing the rate of DNA synthesis while decreasing the length of the DNA fragments, and conferring RNA synthesis capability. The DNA polymerase activity may enable DNA primase to also catalyze primer extension after primer synthesis. May also play a role in DNA repair. The polypeptide is DNA primase small subunit PriS (Pyrobaculum arsenaticum (strain DSM 13514 / JCM 11321 / PZ6)).